Here is a 398-residue protein sequence, read N- to C-terminus: Phosphoglycerate kinase (398 aa).

Substrate-binding positions include 23 to 25, Arg-38, 61 to 64, Arg-122, and Arg-155; these read DFN and HMGK. ATP-binding positions include Lys-206, Gly-297, Glu-328, and 354 to 357; that span reads GGDS.

The protein belongs to the phosphoglycerate kinase family. Monomer.

It is found in the cytoplasm. It carries out the reaction (2R)-3-phosphoglycerate + ATP = (2R)-3-phospho-glyceroyl phosphate + ADP. It participates in carbohydrate degradation; glycolysis; pyruvate from D-glyceraldehyde 3-phosphate: step 2/5. This is Phosphoglycerate kinase from Clostridium botulinum (strain Hall / ATCC 3502 / NCTC 13319 / Type A).